We begin with the raw amino-acid sequence, 158 residues long: Low molecular weight phosphotyrosine protein phosphatase (158 aa).

Ala-2 carries the N-acetylalanine modification. Cys-13 acts as the Nucleophile in catalysis. Arg-19 is a catalytic residue. The active-site Proton donor is Asp-130. A phosphotyrosine mark is found at Tyr-132 and Tyr-133.

It belongs to the low molecular weight phosphotyrosine protein phosphatase family. In terms of assembly, interacts with EPHA2; dephosphorylates EPHA2. Interacts with EPHB1. Interacts with the SH3 domain of SPTAN1. Post-translationally, phosphorylated by LCK. Phosphorylation at Tyr-132 increases its phosphatase activity.

It is found in the cytoplasm. It catalyses the reaction O-phospho-L-tyrosyl-[protein] + H2O = L-tyrosyl-[protein] + phosphate. It carries out the reaction a phosphate monoester + H2O = an alcohol + phosphate. With respect to regulation, inhibited by sulfhydryl reagents. Acts on tyrosine phosphorylated proteins, low-MW aryl phosphates and natural and synthetic acyl phosphates with differences in substrate specificity between isoform 1 and isoform 2. The protein is Low molecular weight phosphotyrosine protein phosphatase (ACP1) of Pongo abelii (Sumatran orangutan).